Consider the following 494-residue polypeptide: Homeotic protein bicoid (494 aa).

Disordered regions lie at residues 1–49 (MAQP…PPQF), 149–210 (RRRH…TAHM), and 263–293 (QQVH…AQQQ). Positions 14–40 (PLPHTHTHPHPHSHPHPHSHPHPHHQH) are enriched in basic residues. Positions 97–156 (PRRTRTTFTSSQIAELEQHFLQGRYLTAPRLADLSAKLALGTAQVKIWFKNRRRRHKIQS) form a DNA-binding region, homeobox. A compositionally biased stretch (basic and acidic residues) spans 154-163 (IQSDQHKDQS). The interval 433–440 (RGAAFAKF) is RNA-binding.

This sequence belongs to the paired homeobox family. Bicoid subfamily. In terms of assembly, interacts with Bin1; in vitro and yeast cells. Interacts with bin3. Maternal expression is an anterior cap concentrated in the cortical cytoplasm. Its transcript is produced maternally and sequestered near the anterior pole of the mature oocyte. After egg deposition, it is translated into protein, which diffuses toward the posterior, forming a long-range anterior gradient.

The protein localises to the nucleus. Segment polarity transcription factor that provides positional cues for the development of head and thoracic segments. Forms a protein concentration gradient that patterns the anterior-posterior axis during embryogenesis and promotes the expression of anterior gap genes, such as hunchback (hb), ocelliless (oc), and buttonhead (btd). Binds to regulatory DNA sequences containing a 5'-TAATCC-3' sequence motif. Also binds RNA. Interacts with Bin1 to repress transcription of bicoid target genes in the anterior tip of the embryo; a process known as retraction. In Drosophila melanogaster (Fruit fly), this protein is Homeotic protein bicoid.